The chain runs to 267 residues: Flap endonuclease Xni (267 aa).

D115 serves as a coordination point for Mg(2+). One can recognise a 5'-3' exonuclease domain in the interval 171–261 (VAPAQLVDFW…LGFNLREIRY (91 aa)). K(+) contacts are provided by L182, V193, and I196. The interval 195–200 (GIGPKT) is interaction with DNA.

This sequence belongs to the Xni family. Mg(2+) serves as cofactor. It depends on K(+) as a cofactor.

Its function is as follows. Has flap endonuclease activity. During DNA replication, flap endonucleases cleave the 5'-overhanging flap structure that is generated by displacement synthesis when DNA polymerase encounters the 5'-end of a downstream Okazaki fragment. The sequence is that of Flap endonuclease Xni from Aeromonas hydrophila subsp. hydrophila (strain ATCC 7966 / DSM 30187 / BCRC 13018 / CCUG 14551 / JCM 1027 / KCTC 2358 / NCIMB 9240 / NCTC 8049).